Consider the following 66-residue polypeptide: MKILYLLLAVLLTVLQSSLGFMRVPNNEAQCEQAGGICSKDHCFHLHTRAFGHCQRGVPCCRTVYD.

A signal peptide spans 1 to 19; sequence MKILYLLLAVLLTVLQSSL. Residues 20–25 constitute a propeptide that is removed on maturation; that stretch reads GFMRVP. Cystine bridges form between Cys31-Cys60, Cys38-Cys54, and Cys43-Cys61.

Belongs to the beta-defensin family. As to expression, expressed in the liver, kidney, gall bladder, testis, ovary and male and femae reproductive tracts. Expressed in the ovarian stroma and the theca and granulosa layers of the ovarian follicle.

It localises to the secreted. Its subcellular location is the cytoplasmic granule. Functionally, has bactericidal activity. This is Gallinacin-8 (GAL8) from Gallus gallus (Chicken).